The chain runs to 154 residues: Snaclec salmorin subunit A (154 aa).

Residues 1–23 form the signal peptide; the sequence is MGRFIFVSFGLLVVFLSLSGTGA. 3 disulfide bridges follow: Cys-27–Cys-38, Cys-55–Cys-152, and Cys-127–Cys-144. The region spanning 34–153 is the C-type lectin domain; that stretch reads NNGHCYQAFN…CGQRNPFVCE (120 aa). Ca(2+)-binding residues include Ser-66, Glu-68, and Glu-72. A Ca(2+)-binding site is contributed by Glu-153.

This sequence belongs to the snaclec family. As to quaternary structure, heterodimer of subunits A and B; disulfide-linked. Expressed by the venom gland.

The protein resides in the secreted. Functionally, inhibits thrombin-induced fibrinogen clotting and factor Xa-induced prothrombin activation. Binds to thrombin and prothrombin exosites. The sequence is that of Snaclec salmorin subunit A from Gloydius brevicauda (Korean slamosa snake).